Consider the following 275-residue polypeptide: Thioredoxin-like 1-1, chloroplastic (275 aa).

A chloroplast-targeting transit peptide spans 1–72 (MTEVISKTSL…GDSQDESFRR (72 aa)). The region spanning 73 to 206 (SSAITAQTTL…FRDALAKHGP (134 aa)) is the Thioredoxin domain. Residues Cys-129 and Cys-132 each act as nucleophile in the active site. A disulfide bond links Cys-129 and Cys-132. The tract at residues 238-275 (KPVPVEKEAATPDSNPSLPVPLPSMSSNDEKTLVSAGR) is disordered. The span at 249–264 (PDSNPSLPVPLPSMSS) shows a compositional bias: low complexity.

This sequence belongs to the thioredoxin family.

It localises to the plastid. The protein resides in the chloroplast. Thiol-disulfide oxidoreductase that may participate in various redox reactions. Possesses insulin disulfide bonds reducing activity. This is Thioredoxin-like 1-1, chloroplastic from Arabidopsis thaliana (Mouse-ear cress).